The primary structure comprises 138 residues: Phosphoribosyl-AMP cyclohydrolase (138 aa).

Asp84 serves as a coordination point for Mg(2+). Position 85 (Cys85) interacts with Zn(2+). Positions 86 and 88 each coordinate Mg(2+). 2 residues coordinate Zn(2+): Cys102 and Cys109.

Belongs to the PRA-CH family. Homodimer. It depends on Mg(2+) as a cofactor. Zn(2+) serves as cofactor.

The protein localises to the cytoplasm. It catalyses the reaction 1-(5-phospho-beta-D-ribosyl)-5'-AMP + H2O = 1-(5-phospho-beta-D-ribosyl)-5-[(5-phospho-beta-D-ribosylamino)methylideneamino]imidazole-4-carboxamide. It participates in amino-acid biosynthesis; L-histidine biosynthesis; L-histidine from 5-phospho-alpha-D-ribose 1-diphosphate: step 3/9. Catalyzes the hydrolysis of the adenine ring of phosphoribosyl-AMP. The polypeptide is Phosphoribosyl-AMP cyclohydrolase (Burkholderia ambifaria (strain ATCC BAA-244 / DSM 16087 / CCUG 44356 / LMG 19182 / AMMD) (Burkholderia cepacia (strain AMMD))).